A 353-amino-acid polypeptide reads, in one-letter code: Photosystem II protein D1 (353 aa).

Residue Thr2 is modified to N-acetylthreonine. At Thr2 the chain carries Phosphothreonine. 3 consecutive transmembrane segments (helical) span residues 29–46 (YIGW…TATS), 118–133 (HFLL…EWEL), and 142–156 (WIAV…AATA). His118 is a chlorophyll a binding site. Residue Tyr126 participates in pheophytin a binding. Residues Asp170 and Glu189 each coordinate [CaMn4O5] cluster. Residues 197-218 (FHMLGVAGVFGGSLFSAMHGSL) form a helical membrane-spanning segment. His198 serves as a coordination point for chlorophyll a. Residues His215 and 264-265 (SF) each bind a quinone. His215 contacts Fe cation. Fe cation is bound at residue His272. A helical membrane pass occupies residues 274–288 (FLTAWPVVGIWFTAL). The [CaMn4O5] cluster site is built by His332, Glu333, Asp342, and Ala344. Positions 345 to 353 (AVEAPSTNG) are excised as a propeptide.

This sequence belongs to the reaction center PufL/M/PsbA/D family. In terms of assembly, PSII is composed of 1 copy each of membrane proteins PsbA, PsbB, PsbC, PsbD, PsbE, PsbF, PsbH, PsbI, PsbJ, PsbK, PsbL, PsbM, PsbT, PsbX, PsbY, PsbZ, Psb30/Ycf12, at least 3 peripheral proteins of the oxygen-evolving complex and a large number of cofactors. It forms dimeric complexes. The cofactor is The D1/D2 heterodimer binds P680, chlorophylls that are the primary electron donor of PSII, and subsequent electron acceptors. It shares a non-heme iron and each subunit binds pheophytin, quinone, additional chlorophylls, carotenoids and lipids. D1 provides most of the ligands for the Mn4-Ca-O5 cluster of the oxygen-evolving complex (OEC). There is also a Cl(-1) ion associated with D1 and D2, which is required for oxygen evolution. The PSII complex binds additional chlorophylls, carotenoids and specific lipids.. Tyr-161 forms a radical intermediate that is referred to as redox-active TyrZ, YZ or Y-Z. In terms of processing, C-terminally processed by CTPA; processing is essential to allow assembly of the oxygen-evolving complex and thus photosynthetic growth.

It localises to the plastid. The protein resides in the chloroplast thylakoid membrane. It carries out the reaction 2 a plastoquinone + 4 hnu + 2 H2O = 2 a plastoquinol + O2. Its function is as follows. Photosystem II (PSII) is a light-driven water:plastoquinone oxidoreductase that uses light energy to abstract electrons from H(2)O, generating O(2) and a proton gradient subsequently used for ATP formation. It consists of a core antenna complex that captures photons, and an electron transfer chain that converts photonic excitation into a charge separation. The D1/D2 (PsbA/PsbD) reaction center heterodimer binds P680, the primary electron donor of PSII as well as several subsequent electron acceptors. The sequence is that of Photosystem II protein D1 from Barbarea verna (Land cress).